A 642-amino-acid chain; its full sequence is Kinesin-like protein KIF12 (642 aa).

Basic and acidic residues predominate over residues 1-13 (MEERGSPDGDPAR). Residues 1–25 (MEERGSPDGDPARNLEQGPEGSETP) form a disordered region. Ser-6 bears the Phosphoserine mark. The Kinesin motor domain maps to 25–360 (PIQVVLRVRP…LRYASRAQRI (336 aa)). 104–111 (GQTGSGKT) lines the ATP pocket. Ser-369 carries the phosphoserine modification. Residues 376–465 (QQVENELLRL…QVHDLERRLL (90 aa)) adopt a coiled-coil conformation. Disordered stretches follow at residues 531 to 561 (GHIS…SQSD) and 579 to 642 (PSAP…LSSC). Residues 538–548 (WPPPWAPPPSP) are compositionally biased toward pro residues. Over residues 610–642 (TLTQQINSSLHLSQRQPQPSEDTQSPGQGLSSC) the composition is skewed to polar residues. Ser-634 is modified (phosphoserine).

Belongs to the TRAFAC class myosin-kinesin ATPase superfamily. Kinesin family. In terms of tissue distribution, expressed in the liver.

It localises to the cytoplasm. The protein resides in the cytoskeleton. This Mus musculus (Mouse) protein is Kinesin-like protein KIF12 (Kif12).